A 176-amino-acid polypeptide reads, in one-letter code: Small ribosomal subunit protein uS5 (176 aa).

The region spanning 11-74 is the S5 DRBM domain; it reads LSEVLVDVNR…QAAKKRMMKV (64 aa).

This sequence belongs to the universal ribosomal protein uS5 family. Part of the 30S ribosomal subunit. Contacts proteins S4 and S8.

Functionally, with S4 and S12 plays an important role in translational accuracy. In terms of biological role, located at the back of the 30S subunit body where it stabilizes the conformation of the head with respect to the body. This is Small ribosomal subunit protein uS5 from Rickettsia africae (strain ESF-5).